Here is a 310-residue protein sequence, read N- to C-terminus: N-acetylmuramic acid 6-phosphate etherase (310 aa).

One can recognise an SIS domain in the interval 64-227 (ITARLKSKGR…STSVMIKLGK (164 aa)). Glutamate 92 serves as the catalytic Proton donor. The active site involves glutamate 123.

Belongs to the GCKR-like family. MurNAc-6-P etherase subfamily. In terms of assembly, homodimer.

The catalysed reaction is N-acetyl-D-muramate 6-phosphate + H2O = N-acetyl-D-glucosamine 6-phosphate + (R)-lactate. It functions in the pathway amino-sugar metabolism; N-acetylmuramate degradation. Specifically catalyzes the cleavage of the D-lactyl ether substituent of MurNAc 6-phosphate, producing GlcNAc 6-phosphate and D-lactate. The chain is N-acetylmuramic acid 6-phosphate etherase from Prochlorococcus marinus (strain NATL1A).